A 530-amino-acid polypeptide reads, in one-letter code: TNF receptor-associated factor family protein DDB_G0272829 (530 aa).

The segment at 35 to 81 adopts an RING-type; degenerate zinc-finger fold; that stretch reads CQICEGLLISSLIPNRMKALQCINGHCFCLTCWESILEIKSECPTCR. 2 consecutive TRAF-type zinc fingers follow at residues 134 to 188 and 189 to 246; these read RHES…KQMQ and GHIL…NDND. 3 disordered regions span residues 242–267, 391–432, and 483–530; these read NNDN…LSSS, TTTT…DNQG, and FNQL…GTSL. Composition is skewed to low complexity over residues 253–267, 391–415, and 485–502; these read NNSN…LSSS, TTTT…NNNN, and QLSQ…SQSL. Residues 361–422 are a coiled coil; that stretch reads ILEHQQQQNQ…NNNNEDEEDD (62 aa). Over residues 509 to 530 the composition is skewed to polar residues; that stretch reads ITINQNQNTPSNPFSIFSGTSL.

This sequence belongs to the TNF receptor-associated factor family.

It localises to the cytoplasm. In terms of biological role, probable adapter protein and signal transducer that links members of the tumor necrosis factor receptor family to different signaling pathways by association with the receptor cytoplasmic domain and kinases. The chain is TNF receptor-associated factor family protein DDB_G0272829 from Dictyostelium discoideum (Social amoeba).